Reading from the N-terminus, the 192-residue chain is C-X-C chemokine receptor type 4 (192 aa).

At Tyr-1 the chain carries Sulfotyrosine. The interval 1 to 11 is important for chemokine binding and signaling; it reads YTEDDLGSGDY. The Extracellular segment spans residues 1-28; sequence YTEDDLGSGDYDSMKEPCFREENAHFNR. Ser-8 carries O-linked (Xyl...) (chondroitin sulfate) serine glycosylation. Position 11 is a sulfotyrosine (Tyr-11). The helical transmembrane segment at 29-53 threads the bilayer; it reads IFLPTVYSIIFLTGIVGNGLVILVM. Residues 54–67 lie on the Cytoplasmic side of the membrane; sequence GYQKKLRSMTDKYR. Residues 68 to 89 traverse the membrane as a helical segment; that stretch reads LHLSVADLLFVLTLPFWAVDAV. The interval 84-87 is chemokine binding; that stretch reads WAVD. The Extracellular segment spans residues 90–100; the sequence is ANWYFGQFLCK. The cysteines at positions 99 and 176 are disulfide-linked. The chain crosses the membrane as a helical span at residues 101 to 120; the sequence is AVHVIYTVNLYSSVLILAFI. Residues 103–107 form a chemokine binding region; it reads HVIYT. Over 121–144 the chain is Cytoplasmic; sequence SLDRYLAIVHATNSQRPRKLLAEK. An Important for signaling motif is present at residues 123–125; that stretch reads DRY. The tract at residues 125–137 is involved in dimerization; when bound to chemokine; the sequence is YLAIVHATNSQRP. The chain crosses the membrane as a helical span at residues 145-164; sequence VVYVGVWLPAVLLTIPDLIF. At 165–185 the chain is on the extracellular side; that stretch reads ADIKEADERYICDRFYPSDLW. The segment at 176-180 is chemokine binding, important for signaling; the sequence is CDRFY. Residues 186 to 192 traverse the membrane as a helical segment; the sequence is LVVFQFQ.

It belongs to the G-protein coupled receptor 1 family. Monomer. Can form homodimers. Interacts with CD164. Interacts with ARRB2; the interaction is dependent on the C-terminal phosphorylation of CXCR4 and allows activation of MAPK1 and MAPK3. Interacts with ARR3; the interaction is dependent on the C-terminal phosphorylation of CXCR4 and modulates calcium mobilization. Interacts with RNF113A; the interaction, enhanced by CXCL12, promotes CXCR4 ubiquitination and subsequent degradation. Interacts (via the cytoplasmic C-terminal) with ITCH (via the WW domains I and II); the interaction, enhanced by CXCL12, promotes CXCR4 ubiquitination and leads to its degradation. Interacts with extracellular ubiquitin. Interacts with DBN1; this interaction is enhanced by antigenic stimulation. Following LPS binding, may form a complex with GDF5, HSP90AA1 and HSPA8. Phosphorylated on agonist stimulation. Rapidly phosphorylated on serine and threonine residues in the C-terminal. In terms of processing, ubiquitinated after ligand binding, leading to its degradation. Ubiquitinated by ITCH at the cell membrane on agonist stimulation. The ubiquitin-dependent mechanism, endosomal sorting complex required for transport (ESCRT), then targets CXCR4 for lysosomal degradation. This process is dependent also on prior Ser-/Thr-phosphorylation in the C-terminal of CXCR4. Also binding of ARRB1 to STAM negatively regulates CXCR4 sorting to lysosomes though modulating ubiquitination of SFR5S. Post-translationally, sulfation is required for efficient binding of CXCL12/SDF-1alpha and promotes its dimerization. O- and N-glycosylated. N-glycosylation can mask coreceptor function. The O-glycosylation chondroitin sulfate attachment does not affect interaction with CXCL12/SDF-1alpha nor its coreceptor activity.

It localises to the cell membrane. The protein resides in the cell junction. Its subcellular location is the early endosome. It is found in the late endosome. The protein localises to the lysosome. Receptor for the C-X-C chemokine CXCL12/SDF-1 that transduces a signal by increasing intracellular calcium ion levels and enhancing MAPK1/MAPK3 activation. Involved in the AKT signaling cascade. Plays a role in regulation of cell migration, e.g. during wound healing. Acts as a receptor for extracellular ubiquitin; leading to enhanced intracellular calcium ions and reduced cellular cAMP levels. Binds bacterial lipopolysaccharide (LPS) et mediates LPS-induced inflammatory response, including TNF secretion by monocytes. Involved in hematopoiesis and in cardiac ventricular septum formation. Also plays an essential role in vascularization of the gastrointestinal tract, probably by regulating vascular branching and/or remodeling processes in endothelial cells. Involved in cerebellar development. In the CNS, could mediate hippocampal-neuron survival. This Ovis aries (Sheep) protein is C-X-C chemokine receptor type 4 (CXCR4).